A 224-amino-acid chain; its full sequence is (S)-2-haloacid dehalogenase H-109 (224 aa).

The Nucleophile role is filled by Asp10. Residues 11 to 12, Arg41, and 118 to 119 each bind an (S)-2-haloacid; these read LY and SN. An important for catalytic activity region spans residues 175 to 180; that stretch reads SSNSWD.

The protein belongs to the HAD-like hydrolase superfamily. S-2-haloalkanoic acid dehalogenase family.

It carries out the reaction an (S)-2-haloacid + H2O = a (2R)-2-hydroxycarboxylate + a halide anion + H(+). It catalyses the reaction (S)-2-chloropropanoate + H2O = (R)-lactate + chloride + H(+). Its function is as follows. Catalyzes the hydrolytic dehalogenation of small (S)-2-haloalkanoic acids to yield the corresponding (R)-2-hydroxyalkanoic acids. Acts on acids of short chain lengths, C(2) to C(4), with inversion of configuration at C-2. Active with 2-halogenated carboxylic acids and converts only the S-isomer (or L-isomer) of 2-chloropropionic acid with inversion of configuration to produce R-lactate (or D-isomer). The polypeptide is (S)-2-haloacid dehalogenase H-109 (Pseudomonas putida (Arthrobacter siderocapsulatus)).